A 321-amino-acid chain; its full sequence is Sporulation protein cse15 (321 aa).

Coiled coils occupy residues 37–70 (FHQK…TKEK) and 108–205 (IEEK…KEKL). 2 stretches are compositionally biased toward basic and acidic residues: residues 234 to 243 (GTKQKEKTEE) and 282 to 293 (AKSHTIEELKNR). Disordered regions lie at residues 234–253 (GTKQ…AQPN) and 274–293 (AHAQ…LKNR).

The chain is Sporulation protein cse15 (cse15) from Bacillus subtilis (strain 168).